The primary structure comprises 423 residues: Histidine--tRNA ligase (423 aa).

Belongs to the class-II aminoacyl-tRNA synthetase family. Homodimer.

The protein resides in the cytoplasm. The catalysed reaction is tRNA(His) + L-histidine + ATP = L-histidyl-tRNA(His) + AMP + diphosphate + H(+). The protein is Histidine--tRNA ligase of Corynebacterium diphtheriae (strain ATCC 700971 / NCTC 13129 / Biotype gravis).